A 367-amino-acid polypeptide reads, in one-letter code: Histidinol-phosphate aminotransferase (367 aa).

K230 carries the post-translational modification N6-(pyridoxal phosphate)lysine.

The protein belongs to the class-II pyridoxal-phosphate-dependent aminotransferase family. Histidinol-phosphate aminotransferase subfamily. Homodimer. The cofactor is pyridoxal 5'-phosphate.

The catalysed reaction is L-histidinol phosphate + 2-oxoglutarate = 3-(imidazol-4-yl)-2-oxopropyl phosphate + L-glutamate. It participates in amino-acid biosynthesis; L-histidine biosynthesis; L-histidine from 5-phospho-alpha-D-ribose 1-diphosphate: step 7/9. This chain is Histidinol-phosphate aminotransferase, found in Thermobifida fusca (strain YX).